A 505-amino-acid polypeptide reads, in one-letter code: Alpha-1-syntrophin (505 aa).

Residues 1–77 (MASGRRAPRT…AEPGAASPPL (77 aa)) are disordered. 2 consecutive PH domains span residues 6 to 269 (RAPR…AQVN) and 293 to 401 (DIKR…DGCH). The PDZ domain occupies 87–170 (RVTVRKADAG…EVVLEVKYMK (84 aa)). Serine 101, serine 184, serine 189, serine 193, and serine 200 each carry phosphoserine. The segment at 180–211 (ASGTSVGWDSPPASPLQRQPSSPGPPPRDLRD) is disordered. In terms of domain architecture, SU spans 449 to 505 (PFEKLQMSSDDGASLLFLDFGGAEGEIQLDLHSCPKTMVFIIHSFLSAKVTRLGLLA). Residues 483 to 505 (PKTMVFIIHSFLSAKVTRLGLLA) form a calmodulin-binding region.

This sequence belongs to the syntrophin family. As to quaternary structure, monomer and homodimer. Interacts with the dystrophin related protein DTNA; SGCG of the dystrophin glycoprotein complex; NOS1; GRB2; GA; TGFA; MAPK12 and the sodium channel proteins SCN4A and SCN5A. Interacts with the dystrophin protein DMD in a calmodulin dependent manner and with related protein UTRN; SGCA of the dystrophin glycoprotein complex; F-actin; calmodulin and with the other members of the syntrophin family SNTB1 and SNTB2. Interacts with MYOC; regulates muscle hypertrophy. Interacts with DTNB. Phosphorylated by CaM-kinase II. Phosphorylation may inhibit the interaction with DMD.

It localises to the cell membrane. The protein resides in the sarcolemma. It is found in the cell junction. Its subcellular location is the cytoplasm. The protein localises to the cytoskeleton. In terms of biological role, adapter protein that binds to and probably organizes the subcellular localization of a variety of membrane proteins. May link various receptors to the actin cytoskeleton and the extracellular matrix via the dystrophin glycoprotein complex. Plays an important role in synapse formation and in the organization of UTRN and acetylcholine receptors at the neuromuscular synapse. Binds to phosphatidylinositol 4,5-bisphosphate. In Bos taurus (Bovine), this protein is Alpha-1-syntrophin (SNTA1).